An 873-amino-acid chain; its full sequence is Probable beta-glucosidase A (873 aa).

The first 19 residues, M1–A19, serve as a signal peptide directing secretion. 3 N-linked (GlcNAc...) asparagine glycosylation sites follow: N71, N222, and N263. Residue D291 is part of the active site. Residues N326, N333, N365, N453, N534, N553, N575, N679, and N725 are each glycosylated (N-linked (GlcNAc...) asparagine). A disordered region spans residues D731–A764.

It belongs to the glycosyl hydrolase 3 family.

It is found in the secreted. It carries out the reaction Hydrolysis of terminal, non-reducing beta-D-glucosyl residues with release of beta-D-glucose.. The protein operates within glycan metabolism; cellulose degradation. Functionally, beta-glucosidases are one of a number of cellulolytic enzymes involved in the degradation of cellulosic biomass. Catalyzes the last step releasing glucose from the inhibitory cellobiose. The chain is Probable beta-glucosidase A (bglA) from Aspergillus fumigatus (strain ATCC MYA-4609 / CBS 101355 / FGSC A1100 / Af293) (Neosartorya fumigata).